The sequence spans 356 residues: Malate dehydrogenase, glyoxysomal (356 aa).

The transit peptide at 1–36 directs the protein to the glyoxysome; the sequence is MQPIPDVNQRIARISAHLHPPKYQMEESSVLRRANC. NAD(+)-binding positions include 51–57 and Asp-77; that span reads GAAGGIG. The substrate site is built by Arg-124 and Arg-130. Residues Asn-137 and 160–162 each bind NAD(+); that span reads ISN. Positions 162 and 196 each coordinate substrate. His-220 serves as the catalytic Proton acceptor. Met-271 contributes to the NAD(+) binding site.

The protein belongs to the LDH/MDH superfamily. MDH type 1 family. Homodimer.

The protein localises to the glyoxysome. It carries out the reaction (S)-malate + NAD(+) = oxaloacetate + NADH + H(+). The protein is Malate dehydrogenase, glyoxysomal (MDHG) of Cucumis sativus (Cucumber).